The following is a 166-amino-acid chain: Succinate dehydrogenase assembly factor 2, mitochondrial (166 aa).

A mitochondrion-targeting transit peptide spans 1–29 (MAVVAVFPALARMLAVSRRRLVSPSLSMT).

Belongs to the SDHAF2 family. Interacts with SDHA within the SDH catalytic dimer.

Its subcellular location is the mitochondrion matrix. Its function is as follows. Plays an essential role in the assembly of succinate dehydrogenase (SDH), an enzyme complex (also referred to as respiratory complex II) that is a component of both the tricarboxylic acid (TCA) cycle and the mitochondrial electron transport chain, and which couples the oxidation of succinate to fumarate with the reduction of ubiquinone (coenzyme Q) to ubiquinol. Required for flavinylation (covalent attachment of FAD) of the flavoprotein subunit SDHA of the SDH catalytic dimer. The protein is Succinate dehydrogenase assembly factor 2, mitochondrial of Bos taurus (Bovine).